A 207-amino-acid polypeptide reads, in one-letter code: ATP synthase subunit b 2 (207 aa).

A compositionally biased stretch (low complexity) spans 1–31; sequence MVAQAAPPAGTAGQGTHEAASAAHGAAAAHG. The disordered stretch occupies residues 1–41; that stretch reads MVAQAAPPAGTAGQGTHEAASAAHGAAAAHGAAEEGHGKKS. The helical transmembrane segment at 48 to 70 threads the bilayer; that stretch reads ATTFASQLLWLVLSFGLLYLLMS.

It belongs to the ATPase B chain family. As to quaternary structure, F-type ATPases have 2 components, F(1) - the catalytic core - and F(0) - the membrane proton channel. F(1) has five subunits: alpha(3), beta(3), gamma(1), delta(1), epsilon(1). F(0) has three main subunits: a(1), b(2) and c(10-14). The alpha and beta chains form an alternating ring which encloses part of the gamma chain. F(1) is attached to F(0) by a central stalk formed by the gamma and epsilon chains, while a peripheral stalk is formed by the delta and b chains.

It is found in the cell inner membrane. In terms of biological role, f(1)F(0) ATP synthase produces ATP from ADP in the presence of a proton or sodium gradient. F-type ATPases consist of two structural domains, F(1) containing the extramembraneous catalytic core and F(0) containing the membrane proton channel, linked together by a central stalk and a peripheral stalk. During catalysis, ATP synthesis in the catalytic domain of F(1) is coupled via a rotary mechanism of the central stalk subunits to proton translocation. Its function is as follows. Component of the F(0) channel, it forms part of the peripheral stalk, linking F(1) to F(0). The chain is ATP synthase subunit b 2 from Xanthobacter autotrophicus (strain ATCC BAA-1158 / Py2).